Here is a 47-residue protein sequence, read N- to C-terminus: Protein RL9A (47 aa).

Residues 27-47 (CMIIVIMIAISIWILTYVLFL) form a helical membrane-spanning segment.

It localises to the host membrane. This Human cytomegalovirus (strain Merlin) (HHV-5) protein is Protein RL9A (RL9A).